A 207-amino-acid chain; its full sequence is MRTLDKRIAPNVKLAASLVARAPTLTLAYDARCKSRLAATLDTGEDVAVLLPRGTILRDGDVLVADDGALVRIAAAPETVLRVRAADPLTLMRAAYHLGNRHTPVEIGDGYLKLEADPVLADMLRRLGTQVEETLAPFQPEAGAYGGGHKHGHDATFAEDYALAQQVFGEHHGHAHSHSHSHDHDHDHDHDHQHGPGCAHGHGHDHH.

The disordered stretch occupies residues 171–207; it reads HHGHAHSHSHSHDHDHDHDHDHQHGPGCAHGHGHDHH. The span at 180-194 shows a compositional bias: basic and acidic residues; sequence HSHDHDHDHDHDHQH.

Belongs to the UreE family.

Its subcellular location is the cytoplasm. In terms of biological role, involved in urease metallocenter assembly. Binds nickel. Probably functions as a nickel donor during metallocenter assembly. The polypeptide is Urease accessory protein UreE (Burkholderia lata (strain ATCC 17760 / DSM 23089 / LMG 22485 / NCIMB 9086 / R18194 / 383)).